A 161-amino-acid chain; its full sequence is Glycine/sarcosine/betaine reductase complex component A2 (161 aa).

Selenocysteine 42 is an active-site residue. Residue selenocysteine 42 is a non-standard amino acid, selenocysteine.

The protein belongs to the GrdA family. Monomer. Component of the glycine, sarcosine and betaine reductase complexes, together with components B and C.

It catalyses the reaction acetyl phosphate + [thioredoxin]-disulfide + NH4(+) + H2O = [thioredoxin]-dithiol + glycine + phosphate + H(+). The enzyme catalyses acetyl phosphate + methylamine + [thioredoxin]-disulfide + H2O = sarcosine + [thioredoxin]-dithiol + phosphate + H(+). It carries out the reaction acetyl phosphate + trimethylamine + [thioredoxin]-disulfide + H2O = glycine betaine + [thioredoxin]-dithiol + phosphate + H(+). Its function is as follows. In the first step of glycine, betaine and sarcosine reductases, the substrate is bound to component PB via a Schiff base intermediate. Then the PB-activated substrate is nucleophilically attacked by the selenol anion of component PA to transform it to a carboxymethylated selenoether and the respective amine. By action of component PC, acetyl phosphate is formed, leaving component PA in its oxidized state. Finally component PA becomes reduced by the thioredoxin system to start a new catalytic cycle of reductive deamination. In Photobacterium profundum (strain SS9), this protein is Glycine/sarcosine/betaine reductase complex component A2 (grdA2).